A 313-amino-acid chain; its full sequence is ADP-L-glycero-D-manno-heptose-6-epimerase (313 aa).

NADP(+) contacts are provided by residues Met10 to Ile11, Asp31 to Asn32, Lys38, Arg53, Glu75 to Ser79, and Asn92. Residue Tyr139 is the Proton acceptor of the active site. Lys143 is an NADP(+) binding site. Asn174 serves as a coordination point for substrate. NADP(+) contacts are provided by Val175 and Lys183. Lys183 functions as the Proton acceptor in the catalytic mechanism. Residues Ser185, His192, Phe206–Ser209, Arg214, and Tyr277 contribute to the substrate site.

Belongs to the NAD(P)-dependent epimerase/dehydratase family. HldD subfamily. Homopentamer. The cofactor is NADP(+).

It catalyses the reaction ADP-D-glycero-beta-D-manno-heptose = ADP-L-glycero-beta-D-manno-heptose. The protein operates within nucleotide-sugar biosynthesis; ADP-L-glycero-beta-D-manno-heptose biosynthesis; ADP-L-glycero-beta-D-manno-heptose from D-glycero-beta-D-manno-heptose 7-phosphate: step 4/4. Its pathway is bacterial outer membrane biogenesis; LPS core biosynthesis. In terms of biological role, catalyzes the interconversion between ADP-D-glycero-beta-D-manno-heptose and ADP-L-glycero-beta-D-manno-heptose via an epimerization at carbon 6 of the heptose. This Vibrio vulnificus (strain YJ016) protein is ADP-L-glycero-D-manno-heptose-6-epimerase.